The following is a 277-amino-acid chain: Bleomycin hydrolase (277 aa).

Residue C53 is part of the active site.

The protein belongs to the peptidase C1 family. In terms of assembly, homohexamer. Interacts with NUDT12 (via ANK repeats).

The protein localises to the cytoplasm. It localises to the cytoplasmic granule. It carries out the reaction Inactivates bleomycin B2 (a cytotoxic glycometallopeptide) by hydrolysis of a carboxyamide bond of beta-aminoalanine, but also shows general aminopeptidase activity. The specificity varies somewhat with source, but amino acid arylamides of Met, Leu and Ala are preferred.. Its activity is regulated as follows. Strongly inhibited by leupeptin, puromycin, NEM, and divalent cations. Its function is as follows. The normal physiological role of BLM hydrolase is unknown, but it catalyzes the inactivation of the antitumor drug BLM (a glycopeptide) by hydrolyzing the carboxamide bond of its B-aminoalaninamide moiety thus protecting normal and malignant cells from BLM toxicity. The protein is Bleomycin hydrolase (BLMH) of Oryctolagus cuniculus (Rabbit).